Here is a 322-residue protein sequence, read N- to C-terminus: Ferredoxin--NADP reductase (322 aa).

FAD-binding residues include aspartate 34, glutamine 42, tyrosine 47, valine 87, phenylalanine 120, aspartate 279, and threonine 320.

It belongs to the ferredoxin--NADP reductase type 2 family. In terms of assembly, homodimer. The cofactor is FAD.

It catalyses the reaction 2 reduced [2Fe-2S]-[ferredoxin] + NADP(+) + H(+) = 2 oxidized [2Fe-2S]-[ferredoxin] + NADPH. This is Ferredoxin--NADP reductase from Streptococcus pneumoniae serotype 2 (strain D39 / NCTC 7466).